The sequence spans 364 residues: Dihydroorotate dehydrogenase (quinone) (364 aa).

FMN-binding positions include 61–65 and threonine 85; that span reads AGFDK. A substrate-binding site is contributed by lysine 65. 110–114 is a substrate binding site; that stretch reads NRMGF. FMN-binding residues include asparagine 139 and asparagine 170. Asparagine 170 lines the substrate pocket. The Nucleophile role is filled by serine 173. Asparagine 175 contacts substrate. FMN-binding residues include lysine 214 and alanine 242. 243–244 is a substrate binding site; the sequence is NT. Residues glycine 266, glycine 295, and 316 to 317 contribute to the FMN site; that span reads YS.

Belongs to the dihydroorotate dehydrogenase family. Type 2 subfamily. Monomer. FMN is required as a cofactor.

It is found in the cell membrane. It catalyses the reaction (S)-dihydroorotate + a quinone = orotate + a quinol. It functions in the pathway pyrimidine metabolism; UMP biosynthesis via de novo pathway; orotate from (S)-dihydroorotate (quinone route): step 1/1. Its function is as follows. Catalyzes the conversion of dihydroorotate to orotate with quinone as electron acceptor. The sequence is that of Dihydroorotate dehydrogenase (quinone) from Rhodopseudomonas palustris (strain TIE-1).